A 163-amino-acid polypeptide reads, in one-letter code: Phosphopantetheine adenylyltransferase (163 aa).

Residue Thr-10 coordinates substrate. Residues 10–11 (TF) and His-18 contribute to the ATP site. 3 residues coordinate substrate: Lys-42, Leu-74, and Arg-88. Residues 89 to 91 (GLR), Glu-99, and 124 to 130 (NSFISST) each bind ATP.

Belongs to the bacterial CoaD family. In terms of assembly, homohexamer. Requires Mg(2+) as cofactor.

The protein localises to the cytoplasm. It carries out the reaction (R)-4'-phosphopantetheine + ATP + H(+) = 3'-dephospho-CoA + diphosphate. It participates in cofactor biosynthesis; coenzyme A biosynthesis; CoA from (R)-pantothenate: step 4/5. Reversibly transfers an adenylyl group from ATP to 4'-phosphopantetheine, yielding dephospho-CoA (dPCoA) and pyrophosphate. The protein is Phosphopantetheine adenylyltransferase of Shewanella baltica (strain OS195).